Consider the following 349-residue polypeptide: DNA-directed RNA polymerase subunit Rpo1N (349 aa).

The disordered stretch occupies residues 306 to 349; it reads EDEGEEFAGEQATNLSESADDRMDRDRPSSHGAAPIDVPEVGDD. The span at 324-334 shows a compositional bias: basic and acidic residues; the sequence is ADDRMDRDRPS.

It belongs to the RNA polymerase beta' chain family. As to quaternary structure, part of the RNA polymerase complex.

Its subcellular location is the cytoplasm. It carries out the reaction RNA(n) + a ribonucleoside 5'-triphosphate = RNA(n+1) + diphosphate. In terms of biological role, DNA-dependent RNA polymerase (RNAP) catalyzes the transcription of DNA into RNA using the four ribonucleoside triphosphates as substrates. Forms the clamp head domain. The protein is DNA-directed RNA polymerase subunit Rpo1N of Halococcus morrhuae (Micrococcus morrhuae).